The primary structure comprises 79 residues: UPF0154 protein SSP1415 (79 aa).

Residues 4-24 (WLAIVLIVLALILGLVGGFFL) traverse the membrane as a helical segment.

The protein belongs to the UPF0154 family.

Its subcellular location is the membrane. This Staphylococcus saprophyticus subsp. saprophyticus (strain ATCC 15305 / DSM 20229 / NCIMB 8711 / NCTC 7292 / S-41) protein is UPF0154 protein SSP1415.